We begin with the raw amino-acid sequence, 142 residues long: Thioredoxin-like protein 4A (142 aa).

A disulfide bond links C38 and C79. Position 132 is a phosphoserine (S132).

Belongs to the DIM1 family. As to quaternary structure, component of the precatalytic spliceosome (spliceosome B complex). Component of the U5 snRNP complex. Component of the U4/U6-U5 tri-snRNP complex. The U4/U6-U5 tri-snRNP complex is a building block of the precatalytic spliceosome (spliceosome B complex). The U4/U6-U5 tri-snRNP complex is composed of the U4, U6 and U5 snRNAs and at least PRPF3, PRPF4, PRPF6, PRPF8, PRPF31, SNRNP200, TXNL4A, SNRNP40, SNRPB, SNRPD1, SNRPD2, SNRPD3, SNRPE, SNRPF, SNRPG, DDX23, CD2BP2, PPIH, SNU13, EFTUD2, SART1 and USP39, plus LSM2, LSM3, LSM4, LSM5, LSM6, LSM7 and LSM8. Directly interacts with CD2BP2. Interacts with HNRPF, HNRPH2, NEDD9 and PQBP1. Interacts with ERBB4. The disulfide bond seen in structures determined by X-ray crystallography and NMR is not essential for protein folding and function.

Its subcellular location is the nucleus. Functionally, plays a role in pre-mRNA splicing as component of the U5 snRNP and U4/U6-U5 tri-snRNP complexes that are involved in spliceosome assembly, and as component of the precatalytic spliceosome (spliceosome B complex). This Homo sapiens (Human) protein is Thioredoxin-like protein 4A (TXNL4A).